The following is a 202-amino-acid chain: Snake venom metalloproteinase fibrolase (202 aa).

One can recognise a Peptidase M12B domain in the interval 6–202 (RYIELVIVAD…HNPQCILNQP (197 aa)). Glu-9 contributes to the Ca(2+) binding site. The N-linked (GlcNAc...) asparagine glycan is linked to Asn-25. Ca(2+) is bound at residue Asp-93. Intrachain disulfides connect Cys-117–Cys-197, Cys-157–Cys-181, and Cys-159–Cys-164. A Zn(2+)-binding site is contributed by His-142. Residue Glu-143 is part of the active site. Positions 146 and 152 each coordinate Zn(2+). 2 residues coordinate Ca(2+): Cys-197 and Asn-200.

This sequence belongs to the venom metalloproteinase (M12B) family. P-I subfamily. In terms of assembly, monomer. The cofactor is Zn(2+). In terms of processing, glycosylated. In terms of tissue distribution, expressed by the venom gland.

It localises to the secreted. It catalyses the reaction Hydrolysis of 14-Ala-|-Leu-15 in insulin B chain and 413-Lys-|-Leu-414 in alpha-chain of fibrinogen.. Its activity is regulated as follows. Activated by calcium and magnesium ions. Inhibited by EDTA, DTT and L-cysteine. Activity is not affected by PMSF or heparin. In terms of biological role, has fibrino(geno)lytic activity on the alpha and beta chains of fibrinogen (FGA and FGB). Inhibits human ADP- and collagen-induced platelet aggregation on platelet-rich plasma but does not affect the thrombin-induced aggregation of rabbit washed platelets. Slightly degrades plasminogen. This chain is Snake venom metalloproteinase fibrolase, found in Macrovipera lebetinus (Levantine viper).